Reading from the N-terminus, the 865-residue chain is Alanine--tRNA ligase (865 aa).

Zn(2+)-binding residues include His552, His556, Cys654, and His658.

This sequence belongs to the class-II aminoacyl-tRNA synthetase family. Zn(2+) serves as cofactor.

It localises to the cytoplasm. It carries out the reaction tRNA(Ala) + L-alanine + ATP = L-alanyl-tRNA(Ala) + AMP + diphosphate. In terms of biological role, catalyzes the attachment of alanine to tRNA(Ala) in a two-step reaction: alanine is first activated by ATP to form Ala-AMP and then transferred to the acceptor end of tRNA(Ala). Also edits incorrectly charged Ser-tRNA(Ala) and Gly-tRNA(Ala) via its editing domain. The protein is Alanine--tRNA ligase of Coxiella burnetii (strain Dugway 5J108-111).